A 168-amino-acid polypeptide reads, in one-letter code: ATP synthase subunit b (168 aa).

Residues 9-29 (AIPFGTIAYTLVVFLILLVML) form a helical membrane-spanning segment.

The protein belongs to the ATPase B chain family. As to quaternary structure, F-type ATPases have 2 components, F(1) - the catalytic core - and F(0) - the membrane proton channel. F(1) has five subunits: alpha(3), beta(3), gamma(1), delta(1), epsilon(1). F(0) has three main subunits: a(1), b(2) and c(10-14). The alpha and beta chains form an alternating ring which encloses part of the gamma chain. F(1) is attached to F(0) by a central stalk formed by the gamma and epsilon chains, while a peripheral stalk is formed by the delta and b chains.

The protein localises to the cell membrane. F(1)F(0) ATP synthase produces ATP from ADP in the presence of a proton or sodium gradient. F-type ATPases consist of two structural domains, F(1) containing the extramembraneous catalytic core and F(0) containing the membrane proton channel, linked together by a central stalk and a peripheral stalk. During catalysis, ATP synthesis in the catalytic domain of F(1) is coupled via a rotary mechanism of the central stalk subunits to proton translocation. Functionally, component of the F(0) channel, it forms part of the peripheral stalk, linking F(1) to F(0). The sequence is that of ATP synthase subunit b from Bacillus cytotoxicus (strain DSM 22905 / CIP 110041 / 391-98 / NVH 391-98).